Consider the following 447-residue polypeptide: tRNA-2-methylthio-N(6)-dimethylallyladenosine synthase (447 aa).

The 117-residue stretch at 4 to 120 folds into the MTTase N-terminal domain; sequence RSFFIKTYGC…INELLERSRT (117 aa). Positions 13, 49, 83, 161, 165, and 168 each coordinate [4Fe-4S] cluster. Positions 147–382 constitute a Radical SAM core domain; the sequence is HEGEFRKFVT…QARQDEIGLE (236 aa). The TRAM domain occupies 385-446; it reads QEYIGTTQEV…QHSLRGSIVE (62 aa).

This sequence belongs to the methylthiotransferase family. MiaB subfamily. Monomer. [4Fe-4S] cluster is required as a cofactor.

The protein resides in the cytoplasm. The enzyme catalyses N(6)-dimethylallyladenosine(37) in tRNA + (sulfur carrier)-SH + AH2 + 2 S-adenosyl-L-methionine = 2-methylsulfanyl-N(6)-dimethylallyladenosine(37) in tRNA + (sulfur carrier)-H + 5'-deoxyadenosine + L-methionine + A + S-adenosyl-L-homocysteine + 2 H(+). Catalyzes the methylthiolation of N6-(dimethylallyl)adenosine (i(6)A), leading to the formation of 2-methylthio-N6-(dimethylallyl)adenosine (ms(2)i(6)A) at position 37 in tRNAs that read codons beginning with uridine. The chain is tRNA-2-methylthio-N(6)-dimethylallyladenosine synthase from Desulfotalea psychrophila (strain LSv54 / DSM 12343).